The sequence spans 475 residues: Sulfate adenylyltransferase subunit 1 (475 aa).

Positions 25–241 (KSLLRFLTCG…LENIEIQRVV (217 aa)) constitute a tr-type G domain. Residues 34 to 41 (GSVDDGKS) form a G1 region. 34 to 41 (GSVDDGKS) lines the GTP pocket. The G2 stretch occupies residues 92 to 96 (GITID). The G3 stretch occupies residues 113 to 116 (DTPG). GTP-binding positions include 113–117 (DTPGH) and 168–171 (NKMD). Residues 168-171 (NKMD) form a G4 region. Residues 206-208 (SAL) form a G5 region.

Belongs to the TRAFAC class translation factor GTPase superfamily. Classic translation factor GTPase family. CysN/NodQ subfamily. Heterodimer composed of CysD, the smaller subunit, and CysN.

It carries out the reaction sulfate + ATP + H(+) = adenosine 5'-phosphosulfate + diphosphate. It functions in the pathway sulfur metabolism; hydrogen sulfide biosynthesis; sulfite from sulfate: step 1/3. Its function is as follows. With CysD forms the ATP sulfurylase (ATPS) that catalyzes the adenylation of sulfate producing adenosine 5'-phosphosulfate (APS) and diphosphate, the first enzymatic step in sulfur assimilation pathway. APS synthesis involves the formation of a high-energy phosphoric-sulfuric acid anhydride bond driven by GTP hydrolysis by CysN coupled to ATP hydrolysis by CysD. This Cronobacter sakazakii (strain ATCC BAA-894) (Enterobacter sakazakii) protein is Sulfate adenylyltransferase subunit 1.